The primary structure comprises 303 residues: Uricase (303 aa).

A2 carries the N-acetylalanine modification. 2 positions are modified to N6-acetyllysine; alternate: K10 and K23. 2 positions are modified to N6-succinyllysine; alternate: K10 and K23. K23 serves as the catalytic Charge relay system. Residues K27 and K36 each carry the N6-acetyllysine modification. A phosphoserine mark is found at S39 and S63. T68 (charge relay system) is an active-site residue. Urate is bound by residues T68 and D69. N6-acetyllysine occurs at positions 118, 122, and 164. Position 170 (F170) interacts with urate. 2 positions are modified to N6-acetyllysine: K175 and K185. R187 provides a ligand contact to urate. An N6-acetyllysine; alternate mark is found at K220 and K227. N6-succinyllysine; alternate is present on residues K220 and K227. S231 carries the post-translational modification Phosphoserine. Urate contacts are provided by V234, Q235, and N261. The active-site Charge relay system is H263. At K277 the chain carries N6-acetyllysine. At Y288 the chain carries Phosphotyrosine. The Microbody targeting signal motif lies at 301-303; the sequence is SRL.

This sequence belongs to the uricase family. Post-translationally, acetylation of Lys-118, Lys-164 and Lys-290 is observed in liver mitochondria from fasted mice but not from fed mice. May be deacetylated by Sirt5; however it is unclear whether Sirt5 mediates deacetylation or desuccinylation of Uox; additional evidence is required to validate these results.

The protein resides in the peroxisome. It localises to the mitochondrion. The enzyme catalyses urate + O2 + H2O = 5-hydroxyisourate + H2O2. The protein operates within purine metabolism; urate degradation; (S)-allantoin from urate: step 1/3. Functionally, catalyzes the oxidation of uric acid to 5-hydroxyisourate, which is further processed to form (S)-allantoin. The chain is Uricase (Uox) from Mus musculus (Mouse).